A 522-amino-acid chain; its full sequence is Zinc finger protein 892 (522 aa).

Disordered regions lie at residues 1–22 (MEPE…GNPK) and 96–124 (AASQ…ESAP). The span at 100-116 (KHWETIPESKELTPEKD) shows a compositional bias: basic and acidic residues. C2H2-type zinc fingers lie at residues 221–243 (WKCN…QRIH), 249–271 (YECN…QRIH), 277–299 (YECH…HIIH), 305–327 (YECN…QRIH), 333–355 (YECN…QVIH), 361–383 (YKCN…QRTH), 389–411 (YECN…QRTH), 417–439 (YKCN…QRTH), 445–467 (YKCK…QKTH), and 473–495 (YKCK…QKTH).

The protein belongs to the krueppel C2H2-type zinc-finger protein family.

The protein resides in the nucleus. Its function is as follows. May be involved in transcriptional regulation. The chain is Zinc finger protein 892 from Homo sapiens (Human).